The sequence spans 425 residues: MSTIIDIHAREILDSRGNPTVEVDVVLEDGTMGRAAVPSGASTGAYEAVERRDGDKSRYMGKGVLEAVAAVNGEIAEELVGFDATEQVAIDAAMIELDGTENKGRLGANAILGVSLAVAKAAADFTAQPLYRYVGGTSARVLPVPMMNIINGGEHADNPIDIQEFMIMPVAAEDIRDAVRMGAEVFHTLKKELSAAGLSTGIGDEGGFAPNIASTREALDFVLKSIEKAGYKPGEDIYLALDCAATEYFKDGKYVLSGEGKTLSSDENVDYLAALVADYPIISIEDGMAEDDWAGWKALTDRLGGKVQLVGDDLFVTNPARLAEGITRGCANSMLVKVNQIGSLTETLKAVDMAHRARYTNVMSHRSGETEDATIADLAVATNCGQIKTGSLARSDRLAKYNQLIRIEEALGEVAEYAGRSILRG.

A (2R)-2-phosphoglycerate-binding site is contributed by Q163. The active-site Proton donor is E205. Residues D242, E285, and D312 each contribute to the Mg(2+) site. (2R)-2-phosphoglycerate-binding residues include K337, R366, S367, and K388. The active-site Proton acceptor is K337.

This sequence belongs to the enolase family. Requires Mg(2+) as cofactor.

The protein localises to the cytoplasm. It localises to the secreted. It is found in the cell surface. It catalyses the reaction (2R)-2-phosphoglycerate = phosphoenolpyruvate + H2O. The protein operates within carbohydrate degradation; glycolysis; pyruvate from D-glyceraldehyde 3-phosphate: step 4/5. Its function is as follows. Catalyzes the reversible conversion of 2-phosphoglycerate (2-PG) into phosphoenolpyruvate (PEP). It is essential for the degradation of carbohydrates via glycolysis. This is Enolase from Ruegeria pomeroyi (strain ATCC 700808 / DSM 15171 / DSS-3) (Silicibacter pomeroyi).